The primary structure comprises 130 residues: Astrocytic phosphoprotein PEA-15 (130 aa).

The DED domain occupies Glu-3–Asp-81. Phosphoserine is present on residues Ser-61 and Ser-90. The microtubule-binding stretch occupies residues Lys-98 to Lys-107. Ser-104 carries the phosphoserine; by PKC modification. Ser-116 carries the phosphoserine; by CaMK2 modification. The microtubule-binding stretch occupies residues Lys-122 to Lys-129.

In terms of assembly, binds RPS6KA3, MAPK3 and MAPK1. Interacts with CASP8 and FADD. Transient interaction with PLD1 and PLD2. Phosphorylated by protein kinase C and calcium-calmodulin-dependent protein kinase. These phosphorylation events are modulated by neurotransmitters or hormones. As to expression, predominantly expressed in the brain. Low levels in some peripheral organs.

The protein localises to the cytoplasm. Blocks Ras-mediated inhibition of integrin activation and modulates the ERK MAP kinase cascade. Inhibits RPS6KA3 activities by retaining it in the cytoplasm. Inhibits both TNFRSF6- and TNFRSF1A-mediated CASP8 activity and apoptosis. Regulates glucose transport by controlling both the content of SLC2A1 glucose transporters on the plasma membrane and the insulin-dependent trafficking of SLC2A4 from the cell interior to the surface. The sequence is that of Astrocytic phosphoprotein PEA-15 (Pea15) from Mus musculus (Mouse).